Here is a 926-residue protein sequence, read N- to C-terminus: Eukaryotic translation initiation factor 3 subunit C (926 aa).

Disordered stretches follow at residues Met1–Ile36 and Ala158–Gly309. The segment covering Gly8–Glu21 has biased composition (low complexity). Over residues Glu165–Glu189 the composition is skewed to acidic residues. Over residues Ser207 to Glu216 the composition is skewed to basic and acidic residues. A compositionally biased stretch (acidic residues) spans Ala217 to Asp243. Positions Thr258–Ala275 are enriched in basic and acidic residues. Positions Glu289–Gly302 are enriched in acidic residues. The 177-residue stretch at Phe675–Pro851 folds into the PCI domain. The interval Gln880–Tyr926 is disordered. Over residues Arg889–Tyr911 the composition is skewed to basic and acidic residues.

It belongs to the eIF-3 subunit C family. As to quaternary structure, component of the eukaryotic translation initiation factor 3 (eIF-3) complex, which is composed of 13 subunits: eif3a, eif3b, eif3c, eif3d, eif3e, eif3f, eif3g, eif3h, eif3i, eif3j, eif3k, eif3l and eif3m.

The protein resides in the cytoplasm. Component of the eukaryotic translation initiation factor 3 (eIF-3) complex, which is involved in protein synthesis of a specialized repertoire of mRNAs and, together with other initiation factors, stimulates binding of mRNA and methionyl-tRNAi to the 40S ribosome. The eIF-3 complex specifically targets and initiates translation of a subset of mRNAs involved in cell proliferation. This chain is Eukaryotic translation initiation factor 3 subunit C (eif3c), found in Xenopus laevis (African clawed frog).